A 336-amino-acid chain; its full sequence is F420-dependent glucose-6-phosphate dehydrogenase (336 aa).

Residue Asp40 coordinates coenzyme F420-(gamma-Glu)n. His41 acts as the Proton donor in catalysis. Residues Thr77 and 108–109 (TG) each bind coenzyme F420-(gamma-Glu)n. The active-site Proton acceptor is Glu110. Coenzyme F420-(gamma-Glu)n-binding positions include Asn113, 176–177 (SG), and 179–180 (AA). Positions 194, 197, 258, and 282 each coordinate substrate.

This sequence belongs to the F420-dependent glucose-6-phosphate dehydrogenase family. In terms of assembly, homodimer.

It catalyses the reaction oxidized coenzyme F420-(gamma-L-Glu)(n) + D-glucose 6-phosphate + H(+) = 6-phospho-D-glucono-1,5-lactone + reduced coenzyme F420-(gamma-L-Glu)(n). Its function is as follows. Catalyzes the coenzyme F420-dependent oxidation of glucose 6-phosphate (G6P) to 6-phosphogluconolactone. The chain is F420-dependent glucose-6-phosphate dehydrogenase from Microbacterium testaceum (strain StLB037).